Reading from the N-terminus, the 490-residue chain is Cytochrome P450 2C29 (490 aa).

The first 25 residues, 1 to 25 (MDLVVFLALTLSCLILLSLWRQSSG), serve as a signal peptide directing secretion. K249, K252, and K375 each carry N6-acetyllysine. C435 is a heme binding site.

Belongs to the cytochrome P450 family. Heme is required as a cofactor. As to expression, expressed in liver as well as in extrahepatic tissues including brain, kidney, lung, heart, and intestine.

It localises to the endoplasmic reticulum membrane. Its subcellular location is the microsome membrane. The enzyme catalyses an organic molecule + reduced [NADPH--hemoprotein reductase] + O2 = an alcohol + oxidized [NADPH--hemoprotein reductase] + H2O + H(+). It carries out the reaction (5Z,8Z,11Z,14Z)-eicosatetraenoate + reduced [NADPH--hemoprotein reductase] + O2 = 14,15-epoxy-(5Z,8Z,11Z)-eicosatrienoate + oxidized [NADPH--hemoprotein reductase] + H2O + H(+). It functions in the pathway lipid metabolism; arachidonate metabolism. Its function is as follows. A cytochrome P450 monooxygenase that selectively catalyzes the epoxidation of 14,15 double bond of (5Z,8Z,11Z,14Z)-eicosatetraenoic acid (arachidonate) forming 14,15-epoxyeicosatrienoic acid (14,15-EET) regioisomer. Mechanistically, uses molecular oxygen inserting one oxygen atom into a substrate, and reducing the second into a water molecule, with two electrons provided by NADPH via cytochrome P450 reductase (CPR; NADPH--hemoprotein reductase). The polypeptide is Cytochrome P450 2C29 (Mus musculus (Mouse)).